The chain runs to 232 residues: Peptide deformylase (232 aa).

The Fe cation site is built by C135 and H178. The active site involves E179. A Fe cation-binding site is contributed by H182.

This sequence belongs to the polypeptide deformylase family. It depends on Fe(2+) as a cofactor.

It carries out the reaction N-terminal N-formyl-L-methionyl-[peptide] + H2O = N-terminal L-methionyl-[peptide] + formate. Its function is as follows. Removes the formyl group from the N-terminal Met of newly synthesized proteins. Requires at least a dipeptide for an efficient rate of reaction. N-terminal L-methionine is a prerequisite for activity but the enzyme has broad specificity at other positions. The polypeptide is Peptide deformylase (Deinococcus radiodurans (strain ATCC 13939 / DSM 20539 / JCM 16871 / CCUG 27074 / LMG 4051 / NBRC 15346 / NCIMB 9279 / VKM B-1422 / R1)).